The following is a 222-amino-acid chain: Vacuolar protein sorting-associated protein 2 homolog 2 (222 aa).

Coiled coils occupy residues 26–83 (RGIE…AQIR) and 143–222 (SEAI…LRRI). The tract at residues 179-222 (SSAPKGRIATKTAAPPASTAATNKNSESSEVDELEKRLASLRRI) is disordered. Positions 187-203 (ATKTAAPPASTAATNKN) are enriched in low complexity.

Belongs to the SNF7 family. Component of the endosomal sorting required for transport complex III (ESCRT-III), composed at least of VPS2, VPS20, VPS24 and VPS32. Interacts with CHMP1A, CHMP1B and VPS60-1.

It is found in the endosome. Component of the ESCRT-III complex, which is required for multivesicular bodies (MVBs) formation and sorting of endosomal cargo proteins into MVBs. The ESCRT-III complex is probably involved in the concentration of MVB cargo. The protein is Vacuolar protein sorting-associated protein 2 homolog 2 (VPS2.2) of Arabidopsis thaliana (Mouse-ear cress).